Reading from the N-terminus, the 397-residue chain is Glutamyl-tRNA reductase (397 aa).

Residues 47 to 50 (TCGR), Ser98, 103 to 105 (ETD), and Gln109 contribute to the substrate site. Residue Cys48 is the Nucleophile of the active site. 177–182 (GAGAVG) contacts NADP(+).

This sequence belongs to the glutamyl-tRNA reductase family. In terms of assembly, homodimer.

It carries out the reaction (S)-4-amino-5-oxopentanoate + tRNA(Glu) + NADP(+) = L-glutamyl-tRNA(Glu) + NADPH + H(+). The protein operates within porphyrin-containing compound metabolism; protoporphyrin-IX biosynthesis; 5-aminolevulinate from L-glutamyl-tRNA(Glu): step 1/2. Catalyzes the NADPH-dependent reduction of glutamyl-tRNA(Glu) to glutamate 1-semialdehyde (GSA). The protein is Glutamyl-tRNA reductase of Pyrobaculum aerophilum (strain ATCC 51768 / DSM 7523 / JCM 9630 / CIP 104966 / NBRC 100827 / IM2).